We begin with the raw amino-acid sequence, 319 residues long: Aspartate carbamoyltransferase catalytic subunit (319 aa).

Carbamoyl phosphate is bound by residues Arg65 and Thr66. Lys93 contributes to the L-aspartate binding site. Carbamoyl phosphate is bound by residues Arg115, His143, and Gln146. Residues Arg176 and Arg230 each contribute to the L-aspartate site. Positions 271 and 272 each coordinate carbamoyl phosphate.

Belongs to the aspartate/ornithine carbamoyltransferase superfamily. ATCase family. As to quaternary structure, heterododecamer (2C3:3R2) of six catalytic PyrB chains organized as two trimers (C3), and six regulatory PyrI chains organized as three dimers (R2).

The catalysed reaction is carbamoyl phosphate + L-aspartate = N-carbamoyl-L-aspartate + phosphate + H(+). It functions in the pathway pyrimidine metabolism; UMP biosynthesis via de novo pathway; (S)-dihydroorotate from bicarbonate: step 2/3. Its function is as follows. Catalyzes the condensation of carbamoyl phosphate and aspartate to form carbamoyl aspartate and inorganic phosphate, the committed step in the de novo pyrimidine nucleotide biosynthesis pathway. In Chelativorans sp. (strain BNC1), this protein is Aspartate carbamoyltransferase catalytic subunit.